The chain runs to 159 residues: Fimbrial protein MyfA (159 aa).

The N-terminal stretch at 1–29 (MNMKKFVKKPLAIAVLMLASGGMVNMVHA) is a signal peptide.

As to quaternary structure, forms a homomer composed of subunits assembled in a large structure resistant to proteases and chaotropic agents.

It is found in the fimbrium. Functionally, major pilus subunit. Expressed only in pathogenic serotypes, it is part of myf, a probable virulence factor. This is Fimbrial protein MyfA (myfA) from Yersinia enterocolitica.